Here is a 421-residue protein sequence, read N- to C-terminus: Caspase-12 (421 aa).

Residues 1 to 92 (MADKKPSKED…QLSLEYQHES (92 aa)) form the CARD domain. Serine 85 bears the Phosphoserine mark. The tract at residues 88-131 (YQHESEDQESEESSASSSSSTESEEENEESKDEERAASAHSMAV) is disordered. Acidic residues predominate over residues 109–118 (ESEEENEESK). Active-site residues include histidine 252 and cysteine 300.

This sequence belongs to the peptidase C14A family. Heterotetramer that consists of two anti-parallel arranged heterodimers, each one formed by two subunits (Potential). May interact with TRAF2.

Involved in the activation cascade of caspases responsible for apoptosis execution. This Macaca mulatta (Rhesus macaque) protein is Caspase-12.